The following is a 622-amino-acid chain: SLAIN motif-containing protein-like (622 aa).

A coiled-coil region spans residues 34 to 60 (DLKEVQKLHELVKRLEIQNQQLKIKRN). Disordered regions lie at residues 404–441 (HRYS…IQNH) and 473–622 (VRSS…DGCY). The segment covering 405–415 (RYSPSPLSSPR) has biased composition (low complexity). Composition is skewed to polar residues over residues 416-430 (CQSP…TTSR), 484-502 (QGPS…STPP), 525-591 (VSTS…STVP), and 599-611 (SRRS…MNST).

This sequence belongs to the SLAIN motif-containing family.

The polypeptide is SLAIN motif-containing protein-like (Xenopus tropicalis (Western clawed frog)).